Reading from the N-terminus, the 547-residue chain is Inositol-tetrakisphosphate 1-kinase 6 (547 aa).

K263 is a binding site for 1D-myo-inositol 1,3,4-trisphosphate. 2 residues coordinate ATP: R317 and K370. An ATP-grasp domain is found at 327 to 539 (LEGLSAEGRP…FWDAIKQSYE (213 aa)). 1D-myo-inositol 1,3,4-trisphosphate-binding residues include H381 and K415. ATP contacts are provided by residues 404-415 (QEYIDHGSKIFK), S430, and S450. D497, D511, and N513 together coordinate Mg(2+). 2 residues coordinate 1D-myo-inositol 1,3,4-trisphosphate: N513 and S517.

This sequence belongs to the ITPK1 family. Monomer. Requires Mg(2+) as cofactor. As to expression, highly expressed in embryos and at lower levels in roots, leaves, flowers and anthers.

It carries out the reaction 1D-myo-inositol 3,4,5,6-tetrakisphosphate + ATP = 1D-myo-inositol 1,3,4,5,6-pentakisphosphate + ADP + H(+). It catalyses the reaction 1D-myo-inositol 1,3,4-trisphosphate + ATP = 1D-myo-inositol 1,3,4,5-tetrakisphosphate + ADP + H(+). The enzyme catalyses 1D-myo-inositol 1,3,4-trisphosphate + ATP = 1D-myo-inositol 1,3,4,6-tetrakisphosphate + ADP + H(+). Its function is as follows. Kinase that can phosphorylate various inositol polyphosphate such as Ins(3,4,5,6)P4 or Ins(1,3,4)P3 and participates in phytic acid biosynthesis in developing seeds. Phytic acid is the primary storage form of phosphorus in cereal grains and other plant seeds. The protein is Inositol-tetrakisphosphate 1-kinase 6 (ITPK6) of Oryza sativa subsp. japonica (Rice).